The following is a 116-amino-acid chain: Putative transmembrane protein ORF116 (116 aa).

Helical transmembrane passes span 20–40 (IVTL…AYAL), 53–73 (LLGG…TNSI), and 76–96 (FRGA…DVIN).

It localises to the host membrane. The sequence is that of Putative transmembrane protein ORF116 from Acidianus bottle-shaped virus (isolate Italy/Pozzuoli) (ABV).